Consider the following 322-residue polypeptide: CRISPR-associated endonuclease Cas1 (322 aa).

Mn(2+) contacts are provided by glutamate 149, histidine 214, and glutamate 229.

This sequence belongs to the CRISPR-associated endonuclease Cas1 family. In terms of assembly, homodimer, forms a heterotetramer with a Cas2 homodimer. Mg(2+) is required as a cofactor. Requires Mn(2+) as cofactor.

CRISPR (clustered regularly interspaced short palindromic repeat), is an adaptive immune system that provides protection against mobile genetic elements (viruses, transposable elements and conjugative plasmids). CRISPR clusters contain spacers, sequences complementary to antecedent mobile elements, and target invading nucleic acids. CRISPR clusters are transcribed and processed into CRISPR RNA (crRNA). Acts as a dsDNA endonuclease. Involved in the integration of spacer DNA into the CRISPR cassette. The chain is CRISPR-associated endonuclease Cas1 from Methanocaldococcus jannaschii (strain ATCC 43067 / DSM 2661 / JAL-1 / JCM 10045 / NBRC 100440) (Methanococcus jannaschii).